Consider the following 98-residue polypeptide: Large ribosomal subunit protein uL23 (98 aa).

Belongs to the universal ribosomal protein uL23 family. As to quaternary structure, part of the 50S ribosomal subunit. Contacts protein L29, and trigger factor when it is bound to the ribosome.

Functionally, one of the early assembly proteins it binds 23S rRNA. One of the proteins that surrounds the polypeptide exit tunnel on the outside of the ribosome. Forms the main docking site for trigger factor binding to the ribosome. This Clostridium kluyveri (strain NBRC 12016) protein is Large ribosomal subunit protein uL23.